We begin with the raw amino-acid sequence, 445 residues long: MSTILKSLPKGENVGIAFSGGLDTSAALLWMKQKGARVFAYTANLGQPDEADYDEIPRKALEFGAEKARLVDCRTQLVHEGIAAIQSGAFHVSTGGIAYFNTTPLGRAVTGTMLVSAMKEDGVNIWGDGSTYKGNDIERFYRYGLLTNPELRIYKPWLDQQFIDELGGRAEMSAFMTAHGFAYKMSAEKAYSTDSNILGATHEAKDLEHLDSGIKIVNPIMGVPFWRDDCAVKAEKVSVRFEEGQPVALNGQTFTDPVALFLEANTIGGRHGLGMSDQIENRIIEAKSRGIYEAPAMALLHIAYERLVTGIHNEDTIEQYRISGMRLGRLLYQGRWFDSQALMLRETAQRWVARAITGEVTLELRRGNDYSILNTESPNLTYAPERLSMEKVEDAAFTPGDRIGQLTMRNLDISDTRRKLNLYTQTGLLSAEQGSHIPRLDNDKS.

ATP is bound by residues 17-25 (AFSGGLDTS) and A43. Y99 provides a ligand contact to L-citrulline. ATP-binding residues include G129 and T131. L-aspartate is bound by residues T131, N135, and D136. N135 contributes to the L-citrulline binding site. D136 is an ATP binding site. R139 and S192 together coordinate L-citrulline. ATP is bound at residue D194. 3 residues coordinate L-citrulline: T201, E203, and E280.

It belongs to the argininosuccinate synthase family. Type 2 subfamily. Homotetramer.

Its subcellular location is the cytoplasm. It catalyses the reaction L-citrulline + L-aspartate + ATP = 2-(N(omega)-L-arginino)succinate + AMP + diphosphate + H(+). It functions in the pathway amino-acid biosynthesis; L-arginine biosynthesis; L-arginine from L-ornithine and carbamoyl phosphate: step 2/3. The protein is Argininosuccinate synthase of Afipia carboxidovorans (strain ATCC 49405 / DSM 1227 / KCTC 32145 / OM5) (Oligotropha carboxidovorans).